The following is a 391-amino-acid chain: ASPTSPKVFPLSLDSTPQDGNVVVACLVQGFFPQEPLSVTWSESGQNVTARNFPPSQDASGDLYTTSSQLTLPATQCPDGKSVTCHVKHYTNSSQDVTVPCRVPPPPPCCHPRLSLHRPALEDLLLGSEANLTCTLTGLRDASGATFTWTPSSGKSAVQGPPERDLCGCYSVSSVLPGCAQPWNHGETFTCTAAHPELKTPLTANITKSGNTFRPEVHLLPPPSEELALNELVTLTCLARGFSPKDVLVRWLQGSQELPREKYLTWASRQEPSQGTTTYAVTSILRVAAEDWKKGETFSCMVGHEALPLAFTQKTIDRMAGSCCVADWQMPPPYVVLDLPQETLEEETPGANLWPTTITFLTLFLLSLFYSTALTVTSVRGPSGKREGPQY.

Residues 1–357 (ASPTSPKVFP…TPGANLWPTT (357 aa)) are Extracellular-facing. Ig-like domains are found at residues 6-98 (PKVF…QDVT), 112-207 (PRLS…ANIT), and 215-317 (PEVH…KTID). A disulfide bridge links C26 with C85. N-linked (GlcNAc...) asparagine glycosylation is present at N47. N-linked (GlcNAc...) (complex) asparagine glycosylation occurs at N92. 2 disulfides stabilise this stretch: C110–C167 and C134–C191. A glycan (N-linked (GlcNAc...) asparagine) is linked at N131. N205 carries N-linked (GlcNAc...) (complex) asparagine glycosylation. C237 and C300 are oxidised to a cystine. A glycan (N-linked (GlcNAc...) (complex) asparagine) is linked at D327. Residues 358 to 379 (ITFLTLFLLSLFYSTALTVTSV) traverse the membrane as a helical segment. At 380 to 391 (RGPSGKREGPQY) the chain is on the cytoplasmic side.

Immunoglobulins are composed of two identical heavy chains and two identical light chains; disulfide-linked. Monomeric or polymeric. Part of the secretory IgA (sIgA) complex that consists of two, four or five IgA monomers, and two additional non-Ig polypeptides, namely the JCHAIN and the secretory component (the proteolytic product of PIGR).

It is found in the secreted. Its subcellular location is the cell membrane. Its function is as follows. Constant region of immunoglobulin heavy chains. Immunoglobulins, also known as antibodies, are membrane-bound or secreted glycoproteins produced by B lymphocytes. In the recognition phase of humoral immunity, the membrane-bound immunoglobulins serve as receptors which, upon binding of a specific antigen, trigger the clonal expansion and differentiation of B lymphocytes into immunoglobulins-secreting plasma cells. Secreted immunoglobulins mediate the effector phase of humoral immunity, which results in the elimination of bound antigens. The antigen binding site is formed by the variable domain of one heavy chain, together with that of its associated light chain. Thus, each immunoglobulin has two antigen binding sites with remarkable affinity for a particular antigen. The variable domains are assembled by a process called V-(D)-J rearrangement and can then be subjected to somatic hypermutations which, after exposure to antigen and selection, allow affinity maturation for a particular antigen. Ig alpha is the major immunoglobulin class in body secretions. The sequence is that of Immunoglobulin heavy constant alpha 2 from Homo sapiens (Human).